Reading from the N-terminus, the 152-residue chain is Keratin, high-sulfur matrix protein, B2C (152 aa).

Ala-2 bears the N-acetylalanine mark. 3 repeats span residues 27-36 (STCSQTSCCQ), 37-46 (PTSIQTSCCQ), and 47-56 (PTCLQTSGCE).

Its function is as follows. The keratin products of mammalian epidermal derivatives such as wool and hair consist of microfibrils embedded in a rigid matrix of other proteins. The matrix proteins include the high-sulfur and high-tyrosine keratins, having molecular weights of 6-20 kDa, whereas the microfibrils contain the larger, low-sulfur keratins (40-56 kDa). The polypeptide is Keratin, high-sulfur matrix protein, B2C (Ovis aries (Sheep)).